Reading from the N-terminus, the 345-residue chain is Ribonucleoside-diphosphate reductase subunit beta (345 aa).

Residues aspartate 88, glutamate 118, and histidine 121 each coordinate Fe cation. Residue tyrosine 125 is part of the active site. Positions 185, 219, and 222 each coordinate Fe cation.

This sequence belongs to the ribonucleoside diphosphate reductase small chain family. As to quaternary structure, tetramer of two alpha and two beta subunits. Requires Fe cation as cofactor.

It catalyses the reaction a 2'-deoxyribonucleoside 5'-diphosphate + [thioredoxin]-disulfide + H2O = a ribonucleoside 5'-diphosphate + [thioredoxin]-dithiol. Its function is as follows. Provides the precursors necessary for DNA synthesis. Catalyzes the biosynthesis of deoxyribonucleotides from the corresponding ribonucleotides. The sequence is that of Ribonucleoside-diphosphate reductase subunit beta (nrdB) from Halalkalibacterium halodurans (strain ATCC BAA-125 / DSM 18197 / FERM 7344 / JCM 9153 / C-125) (Bacillus halodurans).